Here is a 361-residue protein sequence, read N- to C-terminus: DNA replication and repair protein RecF (361 aa).

30-37 is an ATP binding site; the sequence is GPNGSGKT.

This sequence belongs to the RecF family.

It is found in the cytoplasm. Functionally, the RecF protein is involved in DNA metabolism; it is required for DNA replication and normal SOS inducibility. RecF binds preferentially to single-stranded, linear DNA. It also seems to bind ATP. In Yersinia enterocolitica serotype O:8 / biotype 1B (strain NCTC 13174 / 8081), this protein is DNA replication and repair protein RecF.